Here is a 286-residue protein sequence, read N- to C-terminus: Alpha-ketoglutarate-dependent dioxygenase alkB homolog 3 (286 aa).

The interval 21 to 45 (QAIAQPATTAKSHLHQKPGQTWKNK) is disordered. The segment covering 22–31 (AIAQPATTAK) has biased composition (polar residues). Substrate is bound by residues tryptophan 115 and 141-143 (YTY). The 107-residue stretch at 172 to 278 (TFNSLLCNLY…RVNLTFRTVY (107 aa)) folds into the Fe2OG dioxygenase domain. Leucine 177 carries the post-translational modification (4R)-5-hydroxyleucine; alternate. The residue at position 177 (leucine 177) is a (4R)-5-oxoleucine; alternate. Position 179 to 181 (179 to 181 (NLY)) interacts with 2-oxoglutarate. 2 residues coordinate Fe cation: histidine 191 and aspartate 193. Aspartate 194 contacts substrate. Histidine 257 is a Fe cation binding site. 2-oxoglutarate-binding positions include 269–275 (RVNLTFR) and arginine 275.

It belongs to the alkB family. Interacts with the ASCC complex composed of ASCC1, ASCC2 and ASCC3. Interacts directly with ASCC3, and is thereby recruited to the ASCC complex. Interacts with OTUD4; the interaction is direct. Interacts with USP7 and USP9X. It depends on Fe(2+) as a cofactor. Ubiquitinated; undergoes 'Lys-48'-linked polyubiquitination. OTUD4 promotes USP7 and USP9X-dependent deubiquitination of 'Lys-48'-polyubiquitinated ALKBH3 promoting the repair of alkylated DNA lesions. Ubiquitous. Detected in heart, pancreas, skeletal muscle, thymus, testis, ovary, spleen, prostate, small intestine, peripheral blood leukocytes, urinary bladder and colon.

It localises to the nucleus. The protein localises to the cytoplasm. It catalyses the reaction an N(1)-methyladenosine in mRNA + 2-oxoglutarate + O2 = an adenosine in mRNA + formaldehyde + succinate + CO2. It carries out the reaction a methylated nucleobase within DNA + 2-oxoglutarate + O2 = a nucleobase within DNA + formaldehyde + succinate + CO2. The catalysed reaction is an N(1)-methyl-2'-deoxyadenosine in single-stranded DNA + 2-oxoglutarate + O2 = a 2'-deoxyadenosine in single-stranded DNA + formaldehyde + succinate + CO2 + H(+). The enzyme catalyses an N(3)-methyl-2'-deoxycytidine in single-stranded DNA + 2-oxoglutarate + O2 = a 2'-deoxycytidine in single-stranded DNA + formaldehyde + succinate + CO2 + H(+). It catalyses the reaction a 3,N(4)-etheno-2'-deoxycytidine in single-stranded DNA + 2-oxoglutarate + O2 + H2O = a 2'-deoxycytidine in single-stranded DNA + glyoxal + succinate + CO2. Activated by ascorbate. Dioxygenase that mediates demethylation of DNA and RNA containing 1-methyladenosine (m1A). Repairs alkylated DNA containing 1-methyladenosine (m1A) and 3-methylcytosine (m3C) by oxidative demethylation. Has a strong preference for single-stranded DNA. Able to process alkylated m3C within double-stranded regions via its interaction with ASCC3, which promotes DNA unwinding to generate single-stranded substrate needed for ALKBH3. Can repair exocyclic 3,N4-ethenocytosine adducs in single-stranded DNA. Also acts on RNA. Demethylates N(1)-methyladenosine (m1A) RNA, an epigenetic internal modification of messenger RNAs (mRNAs) highly enriched within 5'-untranslated regions (UTRs) and in the vicinity of start codons. Requires molecular oxygen, alpha-ketoglutarate and iron. The chain is Alpha-ketoglutarate-dependent dioxygenase alkB homolog 3 from Homo sapiens (Human).